Here is a 408-residue protein sequence, read N- to C-terminus: Glutamate N-acetyltransferase (408 aa).

T150, K176, T189, E271, N403, and T408 together coordinate substrate. The active-site Nucleophile is T189.

This sequence belongs to the ArgJ family. Heterotetramer of two alpha and two beta chains.

The protein resides in the cytoplasm. The enzyme catalyses N(2)-acetyl-L-ornithine + L-glutamate = N-acetyl-L-glutamate + L-ornithine. It functions in the pathway amino-acid biosynthesis; L-arginine biosynthesis; L-ornithine and N-acetyl-L-glutamate from L-glutamate and N(2)-acetyl-L-ornithine (cyclic): step 1/1. Catalyzes the transfer of the acetyl group from N(2)-acetylornithine to glutamate, forming N-acetylglutamate and L-ornithine. The chain is Glutamate N-acetyltransferase from Methanococcus maripaludis (strain C7 / ATCC BAA-1331).